A 1976-amino-acid chain; its full sequence is MEEESTSEILDGEIVGITFALASHHEICIQSISESAINHPSQLTNAFLGLPLEFGKCESCGATEPDKCEGHFGYIQLPVPIYHPAHVNELKQMLSLLCLKCLKIKKAKGTSGGLADRLLGVCCEEASQISIKDRASDGASYLELKLPSRSRLQPGCWNFLERYGYRYGSDYTRPLLAREVKEILRRIPEESRKKLTAKGHIPQEGYILEYLPVPPNCLSVPEASDGFSTMSVDPSRIELKDVLKKVIAIKSSRSGETNFESHKAEASEMFRVVDTYLQVRGTAKAARNIDMRYGVSKISDSSSSKAWTEKMRTLFIRKGSGFSSRSVITGDAYRHVNEVGIPIEIAQRITFEERVSVHNRGYLQKLVDDKLCLSYTQGSTTYSLRDGSKGHTELKPGQVVHRRVMDGDVVFINRPPTTHKHSLQALRVYVHEDNTVKINPLMCSPLSADFDGDCVHLFYPQSLSAKAEVMELFSVEKQLLSSHTGQLILQMGSDSLLSLRVMLERVFLDKATAQQLAMYGSLSLPPPALRKSSKSGPAWTVFQILQLAFPERLSCKGDRFLVDGSDLLKFDFGVDAMGSIINEIVTSIFLEKGPKETLGFFDSLQPLLMESLFAEGFSLSLEDLSMSRADMDVIHNLIIREISPMVSRLRLSYRDELQLENSIHKVKEVAANFMLKSYSIRNLIDIKSNSAITKLVQQTGFLGLQLSDKKKFYTKTLVEDMAIFCKRKYGRISSSGDFGIVKGCFFHGLDPYEEMAHSIAAREVIVRSSRGLAEPGTLFKNLMAVLRDIVITNDGTVRNTCSNSVIQFKYGVDSERGHQGLFEAGEPVGVLAATAMSNPAYKAVLDSSPNSNSSWELMKEVLLCKVNFQNTTNDRRVILYLNECHCGKRFCQENAACTVRNKLNKVSLKDTAVEFLVEYRKQPTISEIFGIDSCLHGHIHLNKTLLQDWNISMQDIHQKCEDVINSLGQKKKKKATDDFKRTSLSVSECCSFRDPCGSKGSDMPCLTFSYNATDPDLERTLDVLCNTVYPVLLEIVIKGDSRICSANIIWNSSDMTTWIRNRHASRRGEWVLDVTVEKSAVKQSGDAWRVVIDSCLSVLHLIDTKRSIPYSVKQVQELLGLSCAFEQAVQRLSASVRMVSKGVLKEHIILLANNMTCSGTMLGFNSGGYKALTRSLNIKAPFTEATLIAPRKCFEKAAEKCHTDSLSTVVGSCSWGKRVDVGTGSQFELLWNQKETGLDDKEETDVYSFLQMVISTTNADAFVSSPGFDVTEEEMAEWAESPERDSALGEPKFEDSADFQNLHDEGKPSGANWEKSSSWDNGCSGGSEWGVSKSTGGEANPESNWEKTTNVEKEDAWSSWNTRKDAQESSKSDSGGAWGIKTKDADADTTPNWETSPAPKDSIVPENNEPTSDVWGHKSVSDKSWDKKNWGTESAPAAWGSTDAAVWGSSDKKNSETESDAAAWGSRDKNNSDVGSGAGVLGPWNKKSSETESNGATWGSSDKTKSGAAAWNSWDKKNIETDSEPAAWGSQGKKNSETESGPAAWGAWDKKKSETEPGPAGWGMGDKKNSETELGPAAMGNWDKKKSDTKSGPAAWGSTDAAAWGSSDKNNSETESDAAAWGSRNKKTSEIESGAGAWGSWGQPSPTAEDKDTNEDDRNPWVSLKETKSREKDDKERSQWGNPAKKFPSSGGWSNGGGADWKGNRNHTPRPPRSEDNLAPMFTATRQRLDSFTSEEQELLSDVEPVMRTLRKIMHPSAYPDGDPISDDDKTFVLEKILNFHPQKETKLGSGVDFITVDKHTIFSDSRCFFVVSTDGAKQDFSYRKSLNNYLMKKYPDRAEEFIDKYFTKPRPSGNRDRNNQDATPPGEEQSQPPNQSIGNGGDDFQTQTQSQSPSQTRAQSPSQAQAQSPSQTQSQSQSQSQSQSQSQSQSQSQSQSQSQSQSQSQSPSQTQTQSPSQTQAQAQSPSSQSPSQTQT.

Residues C57, C60, C68, H71, C98, and C101 each coordinate Zn(2+). 3 residues coordinate Mg(2+): D449, D451, and D453. Positions 751 to 763 are bridging helix; the sequence is PYEEMAHSIAARE. Repeat 1 spans residues 1215–1216; it reads WG. An 18 X 2 AA repeats of [WG]-[GW] repeats region spans residues 1215 to 1693; the sequence is WGKRVDVGTG…AKKFPSSGGW (479 aa). Disordered stretches follow at residues 1272 to 1291, 1298 to 1718, and 1847 to 1976; these read EEEM…LGEP, DFQN…EDNL, and FTKP…QTQT. Basic and acidic residues-rich tracts occupy residues 1281 to 1291 and 1298 to 1307; these read SPERDSALGEP and DFQNLHDEGK. Residues 1329–1330 form repeat 2; sequence WG. Residues 1332–1348 show a composition bias toward polar residues; sequence SKSTGGEANPESNWEKT. A compositionally biased stretch (basic and acidic residues) spans 1349–1371; sequence TNVEKEDAWSSWNTRKDAQESSK. A run of 15 repeats spans residues 1378-1379, 1415-1416, 1430-1431, 1439-1440, 1447-1448, 1464-1465, 1498-1499, 1528-1529, 1545-1546, 1562-1563, 1596-1597, 1604-1605, 1621-1622, 1638-1639, and 1641-1642. A compositionally biased stretch (basic and acidic residues) spans 1415–1430; it reads WGHKSVSDKSWDKKNW. Residues 1491 to 1501 show a composition bias toward polar residues; sequence TESNGATWGSS. The segment covering 1648–1678 has biased composition (basic and acidic residues); the sequence is AEDKDTNEDDRNPWVSLKETKSREKDDKERS. Tandem repeats lie at residues 1680–1681 and 1692–1693. Residues 1869 to 1878 are compositionally biased toward polar residues; it reads EQSQPPNQSI. Residues 1886–1976 are compositionally biased toward low complexity; that stretch reads QTQTQSQSPS…SSQSPSQTQT (91 aa).

It belongs to the RNA polymerase beta' chain family. As to quaternary structure, component of the RNA polymerase V complex. Interacts with NRPD4, NRPD2A, and (via C-terminus) with AGO4. Interacts with SUVH2. As to expression, mostly expressed in flowers, and, to a lower extent, in leaves. Present in sperm cells.

The protein localises to the nucleus. The protein resides in the nucleolus. It carries out the reaction RNA(n) + a ribonucleoside 5'-triphosphate = RNA(n+1) + diphosphate. Functionally, DNA-dependent RNA polymerase catalyzes the transcription of DNA into RNA using the four ribonucleoside triphosphates as substrates. Largest and catalytic component of RNA polymerase V involved in RNA-directed DNA methylation-dependent (RdDM) silencing of endogenous repeated sequences, including transposable elements. Also required for full erasure of methylation when the RNA trigger is withdrawn. Seems also involved in the synthesis of short-interfering RNAs (siRNA). Essential component of a self-reinforcing loop coupling de novo DNA methylation to siRNA production. Involved in the maintenance of post-transcriptional RNA silencing. This chain is DNA-directed RNA polymerase V subunit 1 (NRPE1), found in Arabidopsis thaliana (Mouse-ear cress).